The chain runs to 548 residues: Glucan 1,4-alpha-maltotetraohydrolase (548 aa).

A signal peptide spans 1–21; it reads MSHILRAAVLAAMLLPLPSMA. Positions 22, 23, 34, 37, and 38 each coordinate Ca(2+). Position 99 to 100 (99 to 100) interacts with substrate; sequence YF. N137 is a binding site for Ca(2+). H138 lines the substrate pocket. A disulfide bridge connects residues C161 and C171. Ca(2+) is bound by residues D172 and D175. 177-181 provides a ligand contact to substrate; sequence FIGGD. Residue D183 coordinates Ca(2+). R212 contacts substrate. Catalysis depends on D214, which acts as the Nucleophile. Residue 217 to 218 coordinates substrate; it reads RG. Position 218 (G218) interacts with Ca(2+). C237 and C272 are disulfide-bonded. The active-site Proton donor is E240. Substrate-binding residues include H314 and Q326. The CBM20 domain maps to 446–548; that stretch reads GEPGALVSVS…SEGATTVGRL (103 aa). A compositionally biased stretch (polar residues) spans 529-542; the sequence is QGGANNSLTPSEGA. Residues 529–548 are disordered; it reads QGGANNSLTPSEGATTVGRL.

It belongs to the glycosyl hydrolase 13 family. Monomer. The cofactor is Ca(2+).

The protein localises to the secreted. The enzyme catalyses Hydrolysis of (1-&gt;4)-alpha-D-glucosidic linkages in amylaceous polysaccharides, to remove successive maltotetraose residues from the non-reducing chain ends.. It functions in the pathway glycan degradation; starch degradation. The protein is Glucan 1,4-alpha-maltotetraohydrolase (amyP) of Stutzerimonas stutzeri (Pseudomonas stutzeri).